The sequence spans 116 residues: Peptidyl-tRNA hydrolase (116 aa).

The protein belongs to the PTH2 family.

It localises to the cytoplasm. It carries out the reaction an N-acyl-L-alpha-aminoacyl-tRNA + H2O = an N-acyl-L-amino acid + a tRNA + H(+). The natural substrate for this enzyme may be peptidyl-tRNAs which drop off the ribosome during protein synthesis. The sequence is that of Peptidyl-tRNA hydrolase from Methanococcus maripaludis (strain C6 / ATCC BAA-1332).